Here is a 234-residue protein sequence, read N- to C-terminus: Structural PPIase-like protein L605 (234 aa).

One can recognise a PPIase cyclophilin-type domain in the interval 18–205 (YMDIVLNNEI…PTFSIGKCGA (188 aa)).

It belongs to the cyclophilin-type PPIase family. In terms of assembly, homotrimer.

The protein localises to the virion. It is found in the host cytoplasm. This is Structural PPIase-like protein L605 from Acanthamoeba polyphaga mimivirus (APMV).